We begin with the raw amino-acid sequence, 156 residues long: Transcriptional repressor NrdR (156 aa).

Residues 3-34 (CPFCGNVDTQVKDSRPAEDHVAIRRRRFCPAC) fold into a zinc finger. Residues 49 to 139 (LVVIKSNGKR…VYKNFQATGD (91 aa)) form the ATP-cone domain.

The protein belongs to the NrdR family. The cofactor is Zn(2+).

Negatively regulates transcription of bacterial ribonucleotide reductase nrd genes and operons by binding to NrdR-boxes. The chain is Transcriptional repressor NrdR from Jannaschia sp. (strain CCS1).